We begin with the raw amino-acid sequence, 182 residues long: Ribosome-recycling factor (182 aa).

The disordered stretch occupies residues 136–158; that stretch reads IKKQEKEGDLSEDQSRDEQDQVQ.

This sequence belongs to the RRF family.

It localises to the cytoplasm. Its function is as follows. Responsible for the release of ribosomes from messenger RNA at the termination of protein biosynthesis. May increase the efficiency of translation by recycling ribosomes from one round of translation to another. The chain is Ribosome-recycling factor from Synechococcus sp. (strain CC9311).